We begin with the raw amino-acid sequence, 744 residues long: Dolasta-1(15),8-diene synthase (744 aa).

The interval 1-344 (MASTMMNYQD…RRYNPAAPLP (344 aa)) is terpene cyclase. Residues Asp108 and Asp112 each coordinate Mg(2+). Substrate-binding positions include Asp108, Asp112, 198–201 (RHYD), 246–250 (SWDKE), and 336–337 (RY). The short motif at 108–112 (DDLTD) is the DDXXD element. The interval 345-744 (RREDIGKVNG…LHLITFQLKV (400 aa)) is prenyltransferase. Residues 399–422 (YTTMTPAETSSDDKKKKAKASHET) form a disordered region. The span at 409-422 (SDDKKKKAKASHET) shows a compositional bias: basic and acidic residues. Isopentenyl diphosphate contacts are provided by Arg459 and His488. Mg(2+) is bound by residues Asp495 and Asp499. Positions 495-499 (DDVQD) match the DDXXD motif. Arg504 contacts dimethylallyl diphosphate. Arg505 serves as a coordination point for isopentenyl diphosphate. 3 residues coordinate dimethylallyl diphosphate: Lys581, Thr582, and Gln617.

It in the N-terminal section; belongs to the terpene synthase family. The protein in the C-terminal section; belongs to the FPP/GGPP synthase family. Hexamer. The cofactor is Mg(2+).

The enzyme catalyses isopentenyl diphosphate + (2E,6E)-farnesyl diphosphate = (2E,6E,10E)-geranylgeranyl diphosphate + diphosphate. It catalyses the reaction (2E,6E,10E)-geranylgeranyl diphosphate = (5R,12R,14S)-dolasta-1(15),8-diene + diphosphate. The catalysed reaction is (2E,6E,10E)-geranylgeranyl diphosphate = delta-araneosene + diphosphate. In terms of biological role, bifunctional terpene synthase involved in the biosynthesis of the diterpenes delta-araneosene and dolasta-1(15),8-diene. The C-terminal prenyltransferase domain of CgDS catalyzes formation of the universal precursor of diterpene, geranylgeranyl diphosphate (GGPP), whereas the N-terminal terpene cyclase domain catalyzes the cyclization of GGPP to the intermediate delta-araneosene that is further converted to dolasta-1(15),8-diene in a second cyclization event. In some cases the cyclization stops at the delta-araneosene stage. This Colletotrichum gloeosporioides (Anthracnose fungus) protein is Dolasta-1(15),8-diene synthase.